A 116-amino-acid polypeptide reads, in one-letter code: Small ribosomal subunit protein bS16 (116 aa).

Residues 88-116 (RNNPKAAVPGKRMAELAKKKAERAAASAE) form a disordered region. Positions 99–110 (RMAELAKKKAER) are enriched in basic and acidic residues.

The protein belongs to the bacterial ribosomal protein bS16 family.

The polypeptide is Small ribosomal subunit protein bS16 (Cereibacter sphaeroides (strain ATCC 17025 / ATH 2.4.3) (Rhodobacter sphaeroides)).